A 612-amino-acid chain; its full sequence is Putative zinc metalloproteinase C607.06c (612 aa).

Histidine 303 lines the Zn(2+) pocket. Residue glutamate 304 is part of the active site. The Zn(2+) site is built by histidine 307 and histidine 313. The 136-residue stretch at 477 to 612 folds into the Jacalin-type lectin domain; it reads VYRSERYGLR…FMDSIGFFIK (136 aa).

It belongs to the peptidase M10B family. It depends on Zn(2+) as a cofactor.

The polypeptide is Putative zinc metalloproteinase C607.06c (Schizosaccharomyces pombe (strain 972 / ATCC 24843) (Fission yeast)).